Here is a 42-residue protein sequence, read N- to C-terminus: Photosystem I reaction center subunit IX (42 aa).

The chain crosses the membrane as a helical span at residues 7–27 (YLSTAPVLSALWFAILAGLLI).

The protein belongs to the PsaJ family.

The protein resides in the plastid. The protein localises to the chloroplast thylakoid membrane. In terms of biological role, may help in the organization of the PsaE and PsaF subunits. This Chlorokybus atmophyticus (Soil alga) protein is Photosystem I reaction center subunit IX.